The chain runs to 67 residues: ATP synthase F(0) complex subunit 8 (67 aa).

The helical transmembrane segment at 8–24 threads the bilayer; the sequence is PWFITILSMIITLFILF. The residue at position 54 (K54) is an N6-acetyllysine; alternate. K54 carries the post-translational modification N6-succinyllysine; alternate. N6-acetyllysine is present on K57.

The protein belongs to the ATPase protein 8 family. Component of the ATP synthase complex composed at least of ATP5F1A/subunit alpha, ATP5F1B/subunit beta, ATP5MC1/subunit c (homooctomer), MT-ATP6/subunit a, MT-ATP8/subunit 8, ATP5ME/subunit e, ATP5MF/subunit f, ATP5MG/subunit g, ATP5MK/subunit k, ATP5MJ/subunit j, ATP5F1C/subunit gamma, ATP5F1D/subunit delta, ATP5F1E/subunit epsilon, ATP5PF/subunit F6, ATP5PB/subunit b, ATP5PD/subunit d, ATP5PO/subunit OSCP. ATP synthase complex consists of a soluble F(1) head domain (subunits alpha(3) and beta(3)) - the catalytic core - and a membrane F(0) domain - the membrane proton channel (subunits c, a, 8, e, f, g, k and j). These two domains are linked by a central stalk (subunits gamma, delta, and epsilon) rotating inside the F1 region and a stationary peripheral stalk (subunits F6, b, d, and OSCP). Interacts with PRICKLE3.

It is found in the mitochondrion membrane. Its function is as follows. Subunit 8, of the mitochondrial membrane ATP synthase complex (F(1)F(0) ATP synthase or Complex V) that produces ATP from ADP in the presence of a proton gradient across the membrane which is generated by electron transport complexes of the respiratory chain. ATP synthase complex consist of a soluble F(1) head domain - the catalytic core - and a membrane F(1) domain - the membrane proton channel. These two domains are linked by a central stalk rotating inside the F(1) region and a stationary peripheral stalk. During catalysis, ATP synthesis in the catalytic domain of F(1) is coupled via a rotary mechanism of the central stalk subunits to proton translocation. In vivo, can only synthesize ATP although its ATP hydrolase activity can be activated artificially in vitro. Part of the complex F(0) domain. This chain is ATP synthase F(0) complex subunit 8, found in Orycteropus afer (Aardvark).